The sequence spans 269 residues: Spermatogenesis-associated serine-rich protein 1 (269 aa).

The span at 1-14 (MESSKDTQHGDALE) shows a compositional bias: basic and acidic residues. Residues 1 to 92 (MESSKDTQHG…SKVSLPEIPK (92 aa)) form a disordered region. Over residues 18-38 (CLANRTSSRQNKRTSLSSSDG) the composition is skewed to polar residues. Phosphothreonine is present on Thr-54. A compositionally biased stretch (low complexity) spans 67–86 (SSSSSSSSSSAQSNRSSKVS). A phosphoserine mark is found at Ser-72, Ser-75, and Ser-82.

The sequence is that of Spermatogenesis-associated serine-rich protein 1 (Spats1) from Mus musculus (Mouse).